A 365-amino-acid chain; its full sequence is UDP-N-acetylglucosamine--N-acetylmuramyl-(pentapeptide) pyrophosphoryl-undecaprenol N-acetylglucosamine transferase (365 aa).

UDP-N-acetyl-alpha-D-glucosamine-binding positions include 17–19 (TGG), Asn-129, Arg-167, Ser-194, Ile-250, 269–274 (ALTVSE), and Gln-295.

Belongs to the glycosyltransferase 28 family. MurG subfamily.

Its subcellular location is the cell inner membrane. It carries out the reaction di-trans,octa-cis-undecaprenyl diphospho-N-acetyl-alpha-D-muramoyl-L-alanyl-D-glutamyl-meso-2,6-diaminopimeloyl-D-alanyl-D-alanine + UDP-N-acetyl-alpha-D-glucosamine = di-trans,octa-cis-undecaprenyl diphospho-[N-acetyl-alpha-D-glucosaminyl-(1-&gt;4)]-N-acetyl-alpha-D-muramoyl-L-alanyl-D-glutamyl-meso-2,6-diaminopimeloyl-D-alanyl-D-alanine + UDP + H(+). Its pathway is cell wall biogenesis; peptidoglycan biosynthesis. Its function is as follows. Cell wall formation. Catalyzes the transfer of a GlcNAc subunit on undecaprenyl-pyrophosphoryl-MurNAc-pentapeptide (lipid intermediate I) to form undecaprenyl-pyrophosphoryl-MurNAc-(pentapeptide)GlcNAc (lipid intermediate II). In Shewanella sediminis (strain HAW-EB3), this protein is UDP-N-acetylglucosamine--N-acetylmuramyl-(pentapeptide) pyrophosphoryl-undecaprenol N-acetylglucosamine transferase.